Reading from the N-terminus, the 863-residue chain is Chloride channel protein A (863 aa).

The Cytoplasmic segment spans residues 1–124 (MFRNNNNDNN…TSKLNHMLKT (124 aa)). The tract at residues 48–78 (ENGLINNNNNSHNNNNGGNNNNHGPSKVTHR) is disordered. Residues 49–71 (NGLINNNNNSHNNNNGGNNNNHG) show a composition bias toward low complexity. 7 consecutive transmembrane segments (helical) span residues 125–145 (FGKW…AYLV), 171–191 (IAFL…SLVI), 228–248 (LVSL…GPMI), 289–309 (GAAA…LFGF), 324–344 (TFFA…GFDM), 367–387 (LIPF…FVNL), and 408–428 (VLEV…CAAF). The tract at residues 434-460 (KTQANGSQTNSLDTSSSSILSSSGDNS) is disordered. Residues 439–460 (GSQTNSLDTSSSSILSSSGDNS) are compositionally biased toward low complexity. A run of 3 helical transmembrane segments spans residues 518–538 (IFTI…TTIT), 539–559 (SGLM…ATFG), and 561–581 (LVGQ…ALVG). CBS domains follow at residues 661 to 742 (MKTE…CHEQ) and 816 to 863 (MNLS…KDLL).

It belongs to the chloride channel (TC 2.A.49) family.

It is found in the membrane. Functionally, voltage-gated chloride channel. Chloride channels may have several functions including the regulation of cell volume, membrane potential stabilization and signal transduction. The chain is Chloride channel protein A (clcA) from Dictyostelium discoideum (Social amoeba).